The sequence spans 448 residues: MRKLFGTDGVRGTANTHPMTAEMALRIGAAVGRYFRREAGGVHRVVIGKDTRLSGYMFENALTAGLASTGMNVLLLGPVPTPAVGLMTRSMRADLGVMISASHNSAEDNGIKFFGPDGFKLSDQAEMEIEEMVATGVRLAQAHNIGRVRRVDDARFRYGERVKSSLTRGLRLDGLKVVVDCANGAAHRTAPEILWELGADVVPIGTSPDGLNINRGCGSTCPRTASEAVVAHGADVGICLDGDADRVIVIDQLGNVADGDQIMALLAARWAAEGRLQGGALVATVMSNLGLERFLGDRGIGLERTAVGDRYVVERMREGGFNLGGEQSGHIVMSDFATTGDGLMAGLHFLGEMMRSGQPSSELVRQFVPVPQLLKNVRFAKGQTPLDAASVQSAIAEAEGVLNGSGRLLIRKSGTEPLIRVMAECEDEALLTRAVDSVVEAVADAVQA.

Ser-102 serves as the catalytic Phosphoserine intermediate. Positions 102, 241, 243, and 245 each coordinate Mg(2+). Ser-102 is subject to Phosphoserine.

This sequence belongs to the phosphohexose mutase family. It depends on Mg(2+) as a cofactor. In terms of processing, activated by phosphorylation.

The catalysed reaction is alpha-D-glucosamine 1-phosphate = D-glucosamine 6-phosphate. Its function is as follows. Catalyzes the conversion of glucosamine-6-phosphate to glucosamine-1-phosphate. This is Phosphoglucosamine mutase from Ruegeria pomeroyi (strain ATCC 700808 / DSM 15171 / DSS-3) (Silicibacter pomeroyi).